A 130-amino-acid polypeptide reads, in one-letter code: Small ribosomal subunit protein uS8 (130 aa).

The protein belongs to the universal ribosomal protein uS8 family. Part of the 30S ribosomal subunit. Contacts proteins S5 and S12.

In terms of biological role, one of the primary rRNA binding proteins, it binds directly to 16S rRNA central domain where it helps coordinate assembly of the platform of the 30S subunit. This is Small ribosomal subunit protein uS8 from Vibrio cholerae serotype O1 (strain ATCC 39541 / Classical Ogawa 395 / O395).